Here is a 122-residue protein sequence, read N- to C-terminus: Large ribosomal subunit protein uL18 (122 aa).

Belongs to the universal ribosomal protein uL18 family. Part of the 50S ribosomal subunit; part of the 5S rRNA/L5/L18/L25 subcomplex. Contacts the 5S and 23S rRNAs.

This is one of the proteins that bind and probably mediate the attachment of the 5S RNA into the large ribosomal subunit, where it forms part of the central protuberance. The polypeptide is Large ribosomal subunit protein uL18 (Mycobacterium leprae (strain TN)).